Reading from the N-terminus, the 361-residue chain is S-adenosylmethionine decarboxylase proenzyme (361 aa).

Residues Glu-11 and Glu-14 contribute to the active site. Ser-71 acts as the Schiff-base intermediate with substrate; via pyruvic acid in catalysis. Residue Ser-71 is modified to Pyruvic acid (Ser); by autocatalysis. The active-site Proton donor; for catalytic activity is the Cys-85. Catalysis depends on proton acceptor; for processing activity residues Ser-234 and His-247.

Belongs to the eukaryotic AdoMetDC family. Pyruvate serves as cofactor. Post-translationally, is synthesized initially as an inactive proenzyme. Formation of the active enzyme involves a self-maturation process in which the active site pyruvoyl group is generated from an internal serine residue via an autocatalytic post-translational modification. Two non-identical subunits are generated from the proenzyme in this reaction, and the pyruvate is formed at the N-terminus of the alpha chain, which is derived from the carboxyl end of the proenzyme. The post-translation cleavage follows an unusual pathway, termed non-hydrolytic serinolysis, in which the side chain hydroxyl group of the serine supplies its oxygen atom to form the C-terminus of the beta chain, while the remainder of the serine residue undergoes an oxidative deamination to produce ammonia and the pyruvoyl group blocking the N-terminus of the alpha chain.

It catalyses the reaction S-adenosyl-L-methionine + H(+) = S-adenosyl 3-(methylsulfanyl)propylamine + CO2. The protein operates within amine and polyamine biosynthesis; S-adenosylmethioninamine biosynthesis; S-adenosylmethioninamine from S-adenosyl-L-methionine: step 1/1. In Daucus carota (Wild carrot), this protein is S-adenosylmethionine decarboxylase proenzyme (SAMDC).